The chain runs to 424 residues: MKPQWQQYINIIKQVVKPALGCTEPIAAAYAAAVARALLGVEPDSIAVQVSDNLYKNSMGVFVPGTGKIGLAIAAAAGAIAGNPDAGLEVLAVITPEQVAKAQALIDAGKVTVERTETAEFIYCCVIAKKGDREALVKICGGHTLIAEKRLNGESVFSVDSTQAKATGSICEGVDITIESIYRFAQEVPFEEIKFILEASELNGKLSDEGMANPYGLEVGRTMKSGIAAGIIGEDLLNKIVMLTAAASDARMGGANLPAMSNLGSGNQGIAATIPVVLTAQCYKVSEEQLARALIMSHLGAIYIKSHYPPLSAFCGNTVTSAAASMAMVYLAGGSFEQSCFAIQNVISDSSGMVCDGAKASCAMKVSTSSSAAVRSFLMALSSHNVSGQGIIATDVEKTIKNIGKMILNGMSSTDVTIIDIMSA.

This sequence belongs to the UPF0597 family.

This chain is UPF0597 protein Sbal_3070, found in Shewanella baltica (strain OS155 / ATCC BAA-1091).